A 394-amino-acid chain; its full sequence is Elongation factor Tu (394 aa).

The 195-residue stretch at 10-204 (KPHVNVGTIG…ALDSYIPTPE (195 aa)) folds into the tr-type G domain. The interval 19–26 (GHVDHGKT) is G1. 19-26 (GHVDHGKT) serves as a coordination point for GTP. Threonine 26 serves as a coordination point for Mg(2+). The G2 stretch occupies residues 60–64 (GITIN). Positions 81-84 (DCPG) are G3. GTP contacts are provided by residues 81–85 (DCPGH) and 136–139 (NKCD). Positions 136 to 139 (NKCD) are G4. A G5 region spans residues 174–176 (SAL).

It belongs to the TRAFAC class translation factor GTPase superfamily. Classic translation factor GTPase family. EF-Tu/EF-1A subfamily. Monomer.

It localises to the cytoplasm. It catalyses the reaction GTP + H2O = GDP + phosphate + H(+). In terms of biological role, GTP hydrolase that promotes the GTP-dependent binding of aminoacyl-tRNA to the A-site of ribosomes during protein biosynthesis. This is Elongation factor Tu from Neisseria meningitidis serogroup A / serotype 4A (strain DSM 15465 / Z2491).